Here is a 373-residue protein sequence, read N- to C-terminus: Gibberellin 3-beta-dioxygenase 2 (373 aa).

The 102-residue stretch at 203–304 folds into the Fe2OG dioxygenase domain; it reads MTATVHLNWY…RVSLGYFLGP (102 aa). Position 212 (Tyr212) interacts with 2-oxoglutarate. Residues His227, Asp229, and His285 each contribute to the Fe cation site. Arg295 and Ser297 together coordinate 2-oxoglutarate.

It belongs to the iron/ascorbate-dependent oxidoreductase family. L-ascorbate serves as cofactor. It depends on Fe(2+) as a cofactor. As to expression, highly expressed in elongating leaves. Expressed in unopened flowers. Expressed at low levels in leaf blades, shoots, rachis, stems and young panicles.

The catalysed reaction is gibberellin A20 + 2-oxoglutarate + O2 = gibberellin A1 + succinate + CO2. It participates in plant hormone biosynthesis; gibberellin biosynthesis. Functionally, catalyzes the 3-beta-hydroxylation of the inactive gibberellin precursors, leading to the formation of bioactive gibberellins. In vitro, converts the precursors GA20, GA5, GA44 and GA9 to the corresponding 3-beta-hydroxylated active products GA1, GA3, GA38 and GA4, respectively. Involved in the production of bioactive GA for vegetative growth and development. Controls the elongation of the vegetative shoot and plant height by the regulation of active gibberellin levels. In Oryza sativa subsp. japonica (Rice), this protein is Gibberellin 3-beta-dioxygenase 2.